Consider the following 1620-residue polypeptide: ALK tyrosine kinase receptor (1620 aa).

Residues M1–A18 form the signal peptide. Residues V19–S1038 lie on the Extracellular side of the membrane. The heparin-binding region stretch occupies residues R48–D70. N-linked (GlcNAc...) asparagine glycosylation is found at N169, N244, N285, N324, N411, N424, N445, N563, N571, and N627. In terms of domain architecture, MAM 1 spans L264–E427. The region spanning L437 to K473 is the LDL-receptor class A domain. Positions F478–L636 constitute an MAM 2 domain. Residues P650 to T674 form a disordered region. The span at N654–P666 shows a compositional bias: basic and acidic residues. Residues C688 and C701 are joined by a disulfide bond. N-linked (GlcNAc...) asparagine glycosylation occurs at N709. C783 and C794 form a disulfide bridge. Residues N808, N863, N864, and N886 are each glycosylated (N-linked (GlcNAc...) asparagine). Cysteines 906 and 928 form a disulfide. The N-linked (GlcNAc...) asparagine glycan is linked to N986. 3 cysteine pairs are disulfide-bonded: C987–C995, C990–C1006, and C1008–C1021. Residues C987–P1025 are EGF-like. A helical transmembrane segment spans residues V1039 to Y1059. Residues R1060–P1620 are Cytoplasmic-facing. Phosphotyrosine occurs at positions 1078, 1092, and 1096. The region spanning I1116–V1392 is the Protein kinase domain. H1124 contacts ATP. Residue Y1131 is modified to Phosphotyrosine. ATP contacts are provided by residues K1150 and E1197–M1199. D1249 (proton acceptor) is an active-site residue. Position 1270 (D1270) interacts with ATP. Y1278 is subject to Phosphotyrosine. Residues E1408–V1463 form a disordered region. Basic and acidic residues predominate over residues K1410–E1419. The residue at position 1507 (Y1507) is a Phosphotyrosine. The disordered stretch occupies residues K1514–T1540. Y1604 carries the post-translational modification Phosphotyrosine.

The protein belongs to the protein kinase superfamily. Tyr protein kinase family. Insulin receptor subfamily. In terms of assembly, homodimer; homodimerizes following heparin- and ligand-binding. Interacts with CBL, IRS1, PIK3R1 and PLCG1. Interacts with FRS2 and SHC1. Interacts with PTN and MDK. In terms of processing, phosphorylated at tyrosine residues by autocatalysis, which activates kinase activity. In cells not stimulated by a ligand, receptor protein tyrosine phosphatase beta and zeta complex (PTPRB/PTPRZ1) dephosphorylates ALK at the sites in ALK that are undergoing autophosphorylation through autoactivation. Phosphorylation at Tyr-1507 is critical for SHC1 association. Post-translationally, N-glycosylated. Expressed in brain and CNS. Also expressed in the small intestine and testis, but not in normal lymphoid cells.

It is found in the cell membrane. The enzyme catalyses L-tyrosyl-[protein] + ATP = O-phospho-L-tyrosyl-[protein] + ADP + H(+). With respect to regulation, activated upon ALKAL2 ligand-binding. ALKAL2-driven activation is coupled with heparin-binding. Following ligand-binding, homodimerizes and autophosphorylates, activating its kinase activity. Inactivated through dephosphorylation by receptor protein tyrosine phosphatase beta and zeta complex (PTPRB/PTPRZ1) when there is no stimulation by a ligand. Staurosporine, crizotinib and CH5424802 act as inhibitors of ALK kinase activity. In terms of biological role, neuronal receptor tyrosine kinase that is essentially and transiently expressed in specific regions of the central and peripheral nervous systems and plays an important role in the genesis and differentiation of the nervous system. Also acts as a key thinness protein involved in the resistance to weight gain: in hypothalamic neurons, controls energy expenditure acting as a negative regulator of white adipose tissue lipolysis and sympathetic tone to fine-tune energy homeostasis. Following activation by ALKAL2 ligand at the cell surface, transduces an extracellular signal into an intracellular response. In contrast, ALKAL1 is not a potent physiological ligand for ALK. Ligand-binding to the extracellular domain induces tyrosine kinase activation, leading to activation of the mitogen-activated protein kinase (MAPK) pathway. Phosphorylates almost exclusively at the first tyrosine of the Y-x-x-x-Y-Y motif. Induces tyrosine phosphorylation of CBL, FRS2, IRS1 and SHC1, as well as of the MAP kinases MAPK1/ERK2 and MAPK3/ERK1. ALK activation may also be regulated by pleiotrophin (PTN) and midkine (MDK). PTN-binding induces MAPK pathway activation, which is important for the anti-apoptotic signaling of PTN and regulation of cell proliferation. MDK-binding induces phosphorylation of the ALK target insulin receptor substrate (IRS1), activates mitogen-activated protein kinases (MAPKs) and PI3-kinase, resulting also in cell proliferation induction. Drives NF-kappa-B activation, probably through IRS1 and the activation of the AKT serine/threonine kinase. Recruitment of IRS1 to activated ALK and the activation of NF-kappa-B are essential for the autocrine growth and survival signaling of MDK. This Homo sapiens (Human) protein is ALK tyrosine kinase receptor.